Here is a 267-residue protein sequence, read N- to C-terminus: Small ribosomal subunit protein mS23 (267 aa).

The interval 230–267 (VKTASKDGKSSNGSMGAEDVVEKTTSAWETEFVEEESS) is disordered.

This sequence belongs to the mitochondrion-specific ribosomal protein mS23 family. In terms of assembly, component of the mitochondrial small ribosomal subunit.

The protein resides in the mitochondrion. In Meyerozyma guilliermondii (strain ATCC 6260 / CBS 566 / DSM 6381 / JCM 1539 / NBRC 10279 / NRRL Y-324) (Yeast), this protein is Small ribosomal subunit protein mS23 (RSM25).